The following is a 931-amino-acid chain: Probable zinc protease PqqL (931 aa).

Histidine 80 contributes to the Zn(2+) binding site. Glutamate 83 (proton acceptor) is an active-site residue. Histidine 84 and glutamate 160 together coordinate Zn(2+).

This sequence belongs to the peptidase M16 family. Zn(2+) serves as cofactor.

This chain is Probable zinc protease PqqL (pqqL), found in Escherichia coli (strain K12).